Here is a 687-residue protein sequence, read N- to C-terminus: DNA ligase (687 aa).

Residues 34-38, 83-84, and E117 contribute to the NAD(+) site; these read DAEYD and SL. K119 serves as the catalytic N6-AMP-lysine intermediate. NAD(+)-binding residues include R140, E182, K298, and K322. Residues C416, C419, C434, and C439 each contribute to the Zn(2+) site. Positions 609–687 constitute a BRCT domain; the sequence is EARGPFAGKT…EEEFVRLLKE (79 aa).

It belongs to the NAD-dependent DNA ligase family. LigA subfamily. The cofactor is Mg(2+). It depends on Mn(2+) as a cofactor.

The catalysed reaction is NAD(+) + (deoxyribonucleotide)n-3'-hydroxyl + 5'-phospho-(deoxyribonucleotide)m = (deoxyribonucleotide)n+m + AMP + beta-nicotinamide D-nucleotide.. In terms of biological role, DNA ligase that catalyzes the formation of phosphodiester linkages between 5'-phosphoryl and 3'-hydroxyl groups in double-stranded DNA using NAD as a coenzyme and as the energy source for the reaction. It is essential for DNA replication and repair of damaged DNA. This Anaeromyxobacter sp. (strain K) protein is DNA ligase.